The chain runs to 200 residues: RPW8-like protein 4 (200 aa).

The RPW8 domain maps to 1–157 (MPIAELAVIK…MKAIQVDQWT (157 aa)). The helical transmembrane segment at 7–29 (AVIKTVGGPLIAAALGVGAQVIY) threads the bilayer. Positions 70 to 127 (REVHESLTRLLEDAKSIIEKYWKLRWSRHVCRKYRYIKKLESIELELVRVAREIQVHQ) form a coiled coil.

The protein belongs to the plant RPW8 protein family.

The protein localises to the membrane. Functionally, probable disease resistance (R) protein. In Arabidopsis thaliana (Mouse-ear cress), this protein is RPW8-like protein 4 (HR4).